The primary structure comprises 896 residues: DNA mismatch repair protein MutS (896 aa).

638 to 645 (GPNMSGKS) lines the ATP pocket.

It belongs to the DNA mismatch repair MutS family.

In terms of biological role, this protein is involved in the repair of mismatches in DNA. It is possible that it carries out the mismatch recognition step. This protein has a weak ATPase activity. The polypeptide is DNA mismatch repair protein MutS (Fusobacterium nucleatum subsp. nucleatum (strain ATCC 25586 / DSM 15643 / BCRC 10681 / CIP 101130 / JCM 8532 / KCTC 2640 / LMG 13131 / VPI 4355)).